The chain runs to 296 residues: Sulfotransferase 1C2 (296 aa).

49–54 contributes to the 3'-phosphoadenylyl sulfate binding site; it reads KSGTTW. 107–109 contacts substrate; that stretch reads RTH. His-109 serves as the catalytic Proton acceptor. Residues Arg-131, Ser-139, Tyr-194, and 228-233 each bind 3'-phosphoadenylyl sulfate; that span reads TSFEKM. Ser-139 carries the post-translational modification Phosphoserine. Residue Ser-254 is modified to Phosphoserine. 256 to 260 lines the 3'-phosphoadenylyl sulfate pocket; it reads FMRKG.

This sequence belongs to the sulfotransferase 1 family. Found in gastrointestinal tract tissues, liver and kidney.

Its subcellular location is the cytoplasm. The protein resides in the lysosome. The protein localises to the mitochondrion. The catalysed reaction is a phenol + 3'-phosphoadenylyl sulfate = an aryl sulfate + adenosine 3',5'-bisphosphate + H(+). It carries out the reaction cholesterol + 3'-phosphoadenylyl sulfate = cholesterol sulfate + adenosine 3',5'-bisphosphate + H(+). Sulfotransferase that utilizes 3'-phospho-5'-adenylyl sulfate (PAPS) to catalyze the sulfate conjugation of phenolic compounds. Does not transfer sulfate to steroids, dopamine, acetaminophen, or alpha-naphthol. Except in mitochondria, where it can add sulfate to cholesterol producing cholesterol sulfate, which alters mitochondrial membrane organization, and impacts protein complex mobility increasing state-III respiration, thereby modulating mitochondrial respiration. Catalyzes the sulfation of the carcinogenic N-hydroxy-2-acetylaminofluorene leading to highly reactive intermediates capable of forming DNA adducts, potentially resulting in mutagenesis. The protein is Sulfotransferase 1C2 (SULT1C2) of Oryctolagus cuniculus (Rabbit).